The primary structure comprises 212 residues: Urease accessory protein UreG 2 (212 aa).

11–18 (GPVGSGKT) is a GTP binding site.

This sequence belongs to the SIMIBI class G3E GTPase family. UreG subfamily. In terms of assembly, homodimer. UreD, UreF and UreG form a complex that acts as a GTP-hydrolysis-dependent molecular chaperone, activating the urease apoprotein by helping to assemble the nickel containing metallocenter of UreC. The UreE protein probably delivers the nickel.

The protein resides in the cytoplasm. Facilitates the functional incorporation of the urease nickel metallocenter. This process requires GTP hydrolysis, probably effectuated by UreG. The sequence is that of Urease accessory protein UreG 2 from Brucella abortus (strain 2308).